A 383-amino-acid polypeptide reads, in one-letter code: Micronemal protein 3 (383 aa).

Positions 1 to 26 (MRGGTSALLHALTFSGAVWMCTPAEA) are cleaved as a signal peptide. Residues 27-66 (LPIQKSVQLGSFDKVVPSREVVSESLAPSFAVTETHSSVQ) constitute a propeptide, required for proper sorting to micronemes. Residues 67–145 (SPSKQETQLC…HPDKSYGGDC (79 aa)) form a lectin-like; required for the binding of host cells region. Required for proper sorting to micronemes stretches follow at residues 146-189 (SCEK…SEDP), 190-236 (CSKR…KRTG), and 237-290 (CHAF…LAEK). The EGF-like domain occupies 186–227 (SEDPCSKRGNAKCGPNGTCIVVDSVSYTCTCGDGETLVNLPE). 2 cysteine pairs are disulfide-bonded: Cys190/Cys204 and Cys198/Cys214. Residue Asn201 is glycosylated (N-linked (GlcNAc...) asparagine). The tract at residues 294 to 359 (EFGISASSCK…HTVTCEKIKH (66 aa)) is involved in dimerization.

As to quaternary structure, homodimer; dimerization is likely required for host cell binding but not for trafficking to micronemes. In terms of processing, removal of the propeptide occurs in a post-medial-Golgi compartment. Removal of the propeptide is required for the host cell binding. The presence of propeptide does not affect dimerization. The presence of propeptide does not affect sorting to micronemes.

It is found in the cytoplasmic vesicle. It localises to the secretory vesicle. The protein resides in the microneme. The protein localises to the secreted. Its subcellular location is the golgi apparatus. It is found in the endoplasmic reticulum. Its function is as follows. Adhesin; can bind both the host cells and the parasites. May be involved in parasite invasion by acting as a bridge between the parasite and the host cell. Triggers innate immune responses in mouse macrophages via the TLR11/MyD88/NF-kappa-B pathway. Induces TNF/TNF-alpha secretion in mouse macrophages. Induces secretion of IL6 in mouse and human macrophages likely via different mechanisms. Up-regulates expression of NOS2/iNOS in mouse macrophages. Induces mouse macrophage polarization. This Toxoplasma gondii protein is Micronemal protein 3.